Consider the following 335-residue polypeptide: tRNA N6-adenosine threonylcarbamoyltransferase (335 aa).

Fe cation is bound by residues histidine 110 and histidine 114. Residues 132–136, aspartate 165, glycine 178, and asparagine 271 each bind substrate; that span reads LVSGG. Aspartate 299 is a binding site for Fe cation.

The protein belongs to the KAE1 / TsaD family. It depends on Fe(2+) as a cofactor.

The protein localises to the cytoplasm. It carries out the reaction L-threonylcarbamoyladenylate + adenosine(37) in tRNA = N(6)-L-threonylcarbamoyladenosine(37) in tRNA + AMP + H(+). Required for the formation of a threonylcarbamoyl group on adenosine at position 37 (t(6)A37) in tRNAs that read codons beginning with adenine. Is involved in the transfer of the threonylcarbamoyl moiety of threonylcarbamoyl-AMP (TC-AMP) to the N6 group of A37, together with TsaE and TsaB. TsaD likely plays a direct catalytic role in this reaction. This Campylobacter jejuni subsp. jejuni serotype O:23/36 (strain 81-176) protein is tRNA N6-adenosine threonylcarbamoyltransferase.